Here is a 202-residue protein sequence, read N- to C-terminus: MSRYRGPRVRIIRRLGVLPGLTNKTPQLKTNSINQSISNKKISQYRIRLEEKQKLRFHYGITERQLLNYVRIARKAKGSTGEVLLQLLEMRLDNIIFRLGMAPTIPGARQLVNHRHILVNDRIVNIPSYRCKPEDSITIKDRQKSQAIISKNLNLYQKYKTPNHLTYNFLKKKGLVTQILDRESIGLKINELLVVEYYSRQA.

The S4 RNA-binding domain maps to 90 to 153 (MRLDNIIFRL…KSQAIISKNL (64 aa)).

This sequence belongs to the universal ribosomal protein uS4 family. In terms of assembly, part of the 30S ribosomal subunit. Contacts protein S5. The interaction surface between S4 and S5 is involved in control of translational fidelity.

It is found in the plastid. It localises to the chloroplast. Functionally, one of the primary rRNA binding proteins, it binds directly to 16S rRNA where it nucleates assembly of the body of the 30S subunit. In terms of biological role, with S5 and S12 plays an important role in translational accuracy. This is Small ribosomal subunit protein uS4c (rps4) from Rosulabryum capillare (Capillary thread-moss).